A 61-amino-acid chain; its full sequence is Small ribosomal subunit protein uS14 (61 aa).

Zn(2+) is bound by residues cysteine 24, cysteine 27, cysteine 40, and cysteine 43.

This sequence belongs to the universal ribosomal protein uS14 family. Zinc-binding uS14 subfamily. In terms of assembly, part of the 30S ribosomal subunit. Contacts proteins S3 and S10. Zn(2+) serves as cofactor.

Its function is as follows. Binds 16S rRNA, required for the assembly of 30S particles and may also be responsible for determining the conformation of the 16S rRNA at the A site. This Anaeromyxobacter sp. (strain Fw109-5) protein is Small ribosomal subunit protein uS14.